The chain runs to 822 residues: Fibroblast growth factor receptor 1 (822 aa).

Positions 1–21 (MWGWRGLLFWAVLVTATLCTA) are cleaved as a signal peptide. The Extracellular portion of the chain corresponds to 22–376 (RPAPTLPEQA…AVMTSPLYLE (355 aa)). An Ig-like C2-type 1 domain is found at 25-119 (PTLPEQAQPW…DTTYFSVNVS (95 aa)). Cys55 and Cys101 are oxidised to a cystine. N-linked (GlcNAc...) asparagine glycans are attached at residues Asn77 and Asn117. The tract at residues 120–162 (DALPSSEDDDDDDDSSSEEKETDNTKPNRRPVAPYWTSPEKME) is disordered. The segment covering 125–135 (SEDDDDDDDSS) has biased composition (acidic residues). Residues 136–145 (SEEKETDNTK) are compositionally biased toward basic and acidic residues. 2 consecutive Ig-like C2-type domains span residues 158–246 (PEKM…YQLD) and 255–357 (PILQ…AWLT). A heparin-binding region spans residues 160-177 (KMEKKLHAVPAAKTVKFK). A disulfide bridge connects residues Cys178 and Cys230. N-linked (GlcNAc...) asparagine glycosylation is found at Asn227, Asn240, Asn264, Asn296, Asn317, and Asn330. A disulfide bridge links Cys277 with Cys341. The chain crosses the membrane as a helical span at residues 377–397 (IIIYCTGAFLISCMVGSVIIY). The Cytoplasmic portion of the chain corresponds to 398 to 822 (KMKSGTKKSD…QLANGGLNRR (425 aa)). Tyr463 is subject to Phosphotyrosine; by autocatalysis. In terms of domain architecture, Protein kinase spans 478-767 (LVLGKPLGEG…VALTSNQEYL (290 aa)). Residues 484–490 (LGEGCFG), Lys514, 562–564 (EYA), and Asn568 each bind ATP. A phosphotyrosine; by autocatalysis mark is found at Tyr583 and Tyr585. Asp623 functions as the Proton acceptor in the catalytic mechanism. Arg627 and Asp641 together coordinate ATP. Tyr653, Tyr654, Tyr730, and Tyr766 each carry phosphotyrosine; by autocatalysis. Positions 770–822 (SMPLDQDSPSFPDTRSSTCSSGEDSVFSHEPFPEEPCLPRHPTQLANGGLNRR) are disordered. Residues 776-792 (DSPSFPDTRSSTCSSGE) are compositionally biased toward polar residues.

It belongs to the protein kinase superfamily. Tyr protein kinase family. Fibroblast growth factor receptor subfamily. Monomer. Homodimer after ligand binding. Interacts predominantly with FGF1 and FGF2, but can also interact with FGF3, FGF4, FGF5, FGF6, FGF8, FGF10, FGF19, FGF21, FGF22 and FGF23 (in vitro). Ligand specificity is determined by tissue-specific expression of isoforms, and differences in the third Ig-like domain are crucial for ligand specificity. Affinity for fibroblast growth factors (FGFs) is increased by heparan sulfate glycosaminoglycans that function as coreceptors. Likewise, KLB increases the affinity for FGF19, FGF21 and FGF23. Interacts (phosphorylated on Tyr-766) with PLCG1 (via SH2 domains). Interacts with FRS2. Interacts (via C-terminus) with NEDD4 (via WW3 domain). Interacts with RPS6KA1. Interacts with KL. Interacts with SHB (via SH2 domain) and GRB10. Interacts with ANOS1; this interaction does not interfere with FGF2-binding to FGFR1, but prevents binding of heparin-bound FGF2. Interacts with SOX2 and SOX3. Interacts with FLRT1, FLRT2 and FLRT3. Found in a ternary complex with FGF1 and ITGAV:ITGB3. In terms of processing, autophosphorylated. Binding of FGF family members together with heparan sulfate proteoglycan or heparin promotes receptor dimerization and autophosphorylation on tyrosine residues. Autophosphorylation occurs in trans between the two FGFR molecules present in the dimer and proceeds in a highly ordered manner. Initial autophosphorylation at Tyr-653 increases the kinase activity by a factor of 50 to 100. After this, Tyr-583 becomes phosphorylated, followed by phosphorylation of Tyr-463, Tyr-766, Tyr-583 and Tyr-585. In a third stage, Tyr-654 is autophosphorylated, resulting in a further tenfold increase of kinase activity. Phosphotyrosine residues provide docking sites for interacting proteins and so are crucial for FGFR1 function and its regulation. Post-translationally, ubiquitinated. FGFR1 is rapidly ubiquitinated by NEDD4 after autophosphorylation, leading to internalization and lysosomal degradation. CBL is recruited to activated FGFR1 via FRS2 and GRB2, and mediates ubiquitination and subsequent degradation of FGFR1. N-glycosylated in the endoplasmic reticulum. The N-glycan chains undergo further maturation to an Endo H-resistant form in the Golgi apparatus. As to expression, expressed in the parathyroid.

It is found in the cell membrane. The protein localises to the nucleus. It localises to the cytoplasm. The protein resides in the cytosol. Its subcellular location is the cytoplasmic vesicle. The catalysed reaction is L-tyrosyl-[protein] + ATP = O-phospho-L-tyrosyl-[protein] + ADP + H(+). Present in an inactive conformation in the absence of bound ligand. Ligand binding leads to dimerization and activation by sequential autophosphorylation on tyrosine residues. In terms of biological role, tyrosine-protein kinase that acts as a cell-surface receptor for fibroblast growth factors and plays an essential role in the regulation of embryonic development, cell proliferation, differentiation and migration. Required for normal mesoderm patterning and correct axial organization during embryonic development, normal skeletogenesis and normal development of the gonadotropin-releasing hormone (GnRH) neuronal system. Phosphorylates PLCG1, FRS2, GAB1 and SHB. Ligand binding leads to the activation of several signaling cascades. Activation of PLCG1 leads to the production of the cellular signaling molecules diacylglycerol and inositol 1,4,5-trisphosphate. Phosphorylation of FRS2 triggers recruitment of GRB2, GAB1, PIK3R1 and SOS1, and mediates activation of RAS, MAPK1/ERK2, MAPK3/ERK1 and the MAP kinase signaling pathway, as well as of the AKT1 signaling pathway. Promotes phosphorylation of SHC1, STAT1 and PTPN11/SHP2. In the nucleus, enhances RPS6KA1 and CREB1 activity and contributes to the regulation of transcription. FGFR1 signaling is down-regulated by IL17RD/SEF, and by FGFR1 ubiquitination, internalization and degradation. The polypeptide is Fibroblast growth factor receptor 1 (Fgfr1) (Rattus norvegicus (Rat)).